The sequence spans 280 residues: Dual adapter for phosphotyrosine and 3-phosphotyrosine and 3-phosphoinositide (280 aa).

The region spanning 35 to 129 is the SH2 domain; that stretch reads WYHGNLTRHA…GTLMVLKHPY (95 aa). The residue at position 139 (Tyr-139) is a Phosphotyrosine. Ser-141 carries the post-translational modification Phosphoserine. A PH domain is found at 164–259; that stretch reads LGTKEGYLTK…WIKILRWKLS (96 aa).

Interacts with PtdIns(3,4,5)P3 and PLCG2. In terms of processing, phosphorylated on tyrosine residues.

It localises to the cytoplasm. Its subcellular location is the membrane. In terms of biological role, may act as a B-cell-associated adapter that regulates B-cell antigen receptor (BCR)-signaling downstream of PI3K. This chain is Dual adapter for phosphotyrosine and 3-phosphotyrosine and 3-phosphoinositide (Dapp1), found in Mus musculus (Mouse).